The chain runs to 148 residues: Large ribosomal subunit protein bL9 (148 aa).

The protein belongs to the bacterial ribosomal protein bL9 family.

Its function is as follows. Binds to the 23S rRNA. This is Large ribosomal subunit protein bL9 from Desulfatibacillum aliphaticivorans.